Here is a 482-residue protein sequence, read N- to C-terminus: Probable glycine dehydrogenase (decarboxylating) subunit 2 (482 aa).

Lys-264 bears the N6-(pyridoxal phosphate)lysine mark.

Belongs to the GcvP family. C-terminal subunit subfamily. As to quaternary structure, the glycine cleavage system is composed of four proteins: P, T, L and H. In this organism, the P 'protein' is a heterodimer of two subunits. Requires pyridoxal 5'-phosphate as cofactor.

The enzyme catalyses N(6)-[(R)-lipoyl]-L-lysyl-[glycine-cleavage complex H protein] + glycine + H(+) = N(6)-[(R)-S(8)-aminomethyldihydrolipoyl]-L-lysyl-[glycine-cleavage complex H protein] + CO2. The glycine cleavage system catalyzes the degradation of glycine. The P protein binds the alpha-amino group of glycine through its pyridoxal phosphate cofactor; CO(2) is released and the remaining methylamine moiety is then transferred to the lipoamide cofactor of the H protein. The chain is Probable glycine dehydrogenase (decarboxylating) subunit 2 from Treponema denticola (strain ATCC 35405 / DSM 14222 / CIP 103919 / JCM 8153 / KCTC 15104).